A 72-amino-acid chain; its full sequence is Toxin Acra II-1 (72 aa).

The 65-residue stretch at 3 to 67 (VPGNYPLNTY…VWNAAKNYCK (65 aa)) folds into the LCN-type CS-alpha/beta domain. 3 disulfide bridges follow: C18-C41, C27-C46, and C31-C48.

Belongs to the long (3 C-C) scorpion toxin superfamily. Sodium channel inhibitor family. Beta subfamily. Expressed by the venom gland.

The protein resides in the secreted. Functionally, binds to sodium channels (Nav) and affects the channel activation process. The sequence is that of Toxin Acra II-1 from Androctonus crassicauda (Arabian fat-tailed scorpion).